Reading from the N-terminus, the 223-residue chain is Phosphoribosylformylglycinamidine synthase subunit PurQ (223 aa).

In terms of domain architecture, Glutamine amidotransferase type-1 spans 4–223; that stretch reads RIGVITFPGT…FQSVLSTLVS (220 aa). Cysteine 87 serves as the catalytic Nucleophile. Catalysis depends on residues histidine 195 and glutamate 197.

As to quaternary structure, part of the FGAM synthase complex composed of 1 PurL, 1 PurQ and 2 PurS subunits.

It localises to the cytoplasm. The catalysed reaction is N(2)-formyl-N(1)-(5-phospho-beta-D-ribosyl)glycinamide + L-glutamine + ATP + H2O = 2-formamido-N(1)-(5-O-phospho-beta-D-ribosyl)acetamidine + L-glutamate + ADP + phosphate + H(+). It carries out the reaction L-glutamine + H2O = L-glutamate + NH4(+). The protein operates within purine metabolism; IMP biosynthesis via de novo pathway; 5-amino-1-(5-phospho-D-ribosyl)imidazole from N(2)-formyl-N(1)-(5-phospho-D-ribosyl)glycinamide: step 1/2. Its function is as follows. Part of the phosphoribosylformylglycinamidine synthase complex involved in the purines biosynthetic pathway. Catalyzes the ATP-dependent conversion of formylglycinamide ribonucleotide (FGAR) and glutamine to yield formylglycinamidine ribonucleotide (FGAM) and glutamate. The FGAM synthase complex is composed of three subunits. PurQ produces an ammonia molecule by converting glutamine to glutamate. PurL transfers the ammonia molecule to FGAR to form FGAM in an ATP-dependent manner. PurS interacts with PurQ and PurL and is thought to assist in the transfer of the ammonia molecule from PurQ to PurL. This chain is Phosphoribosylformylglycinamidine synthase subunit PurQ, found in Corynebacterium jeikeium (strain K411).